The chain runs to 406 residues: 4-hydroxy-3-methylbut-2-en-1-yl diphosphate synthase (ferredoxin) (406 aa).

[4Fe-4S] cluster-binding residues include Cys-313, Cys-316, Cys-347, and Glu-354.

It belongs to the IspG family. [4Fe-4S] cluster is required as a cofactor.

The catalysed reaction is (2E)-4-hydroxy-3-methylbut-2-enyl diphosphate + 2 oxidized [2Fe-2S]-[ferredoxin] + H2O = 2-C-methyl-D-erythritol 2,4-cyclic diphosphate + 2 reduced [2Fe-2S]-[ferredoxin] + H(+). The protein operates within isoprenoid biosynthesis; isopentenyl diphosphate biosynthesis via DXP pathway; isopentenyl diphosphate from 1-deoxy-D-xylulose 5-phosphate: step 5/6. Functionally, converts 2C-methyl-D-erythritol 2,4-cyclodiphosphate (ME-2,4cPP) into 1-hydroxy-2-methyl-2-(E)-butenyl 4-diphosphate. In Picosynechococcus sp. (strain ATCC 27264 / PCC 7002 / PR-6) (Agmenellum quadruplicatum), this protein is 4-hydroxy-3-methylbut-2-en-1-yl diphosphate synthase (ferredoxin).